The sequence spans 2521 residues: Partially reducing polyketide synthase tpeA (2521 aa).

The Ketosynthase family 3 (KS3) domain maps to D7–N434. A disordered region spans residues R47–T66. Active-site for beta-ketoacyl synthase activity residues include C180, H315, and H357. Residues Y554–Q855 enclose the Malonyl-CoA:ACP transacylase (MAT) domain. The tract at residues S948–L1088 is N-terminal hotdog fold. One can recognise a PKS/mFAS DH domain in the interval S948 to V1258. Residues S949 to A1256 are dehydratase (DH) domain. The tract at residues T1100–V1258 is C-terminal hotdog fold. One can recognise an Enoyl reductase (ER) domain in the interval G1809–L2121. Residues T2146–K2323 form the Ketoreductase (KR) domain. The Carrier domain occupies D2433 to G2510. Residue S2470 is modified to O-(pantetheine 4'-phosphoryl)serine.

Pantetheine 4'-phosphate is required as a cofactor.

It participates in secondary metabolite biosynthesis. Its function is as follows. Partially reducing polyketide synthase; part of the gene cluster that mediates the biosynthesis of polyesters containing 2,4-dihydroxy-6-(2-hydroxypropyl)benzoate and 3-hydroxybutyrate moieties, such as talapolyester G, 15G256beta and 15G256beta-2; as well as to oxidized derivatives such as 15G256alpha. The biosynthesis of the polyesters probably starts with the formation of the diketide 3-hydroxybutyryl-S-ACP catalyzed by the partially reducing polyketide synthase tpeA. The acceptance of 3-hydroxybutyryl by the non-reducing polyketide synthase tpeB would initiate further elongation and cyclization, catalyzed by KS and PT, respectively, to form 2,4-dihydroxy-6-(2-hydroxyn-propyl)benzoyl-S-ACP intermediate. The TE domain could catalyze lactonization at this step to yield 6-hydroxymellein as a derailment product. The polyesterification process maybe occurs when additional molecules of 3-hydroxybutyryl are transferred to tpeB. Following the first esterification step, an intramolecular cyclization catalyzed by the TE domain of tpeB would give talarodioxadione 1, whereas the ethyl esterification of talapolyester G perhaps happens spontaneously. Further oxidation by the cytochrome P450 monooxygenase tpeC then leads to the formation of oxidized derivatives. The sequence is that of Partially reducing polyketide synthase tpeA from Talaromyces stipitatus (strain ATCC 10500 / CBS 375.48 / QM 6759 / NRRL 1006) (Penicillium stipitatum).